Reading from the N-terminus, the 415-residue chain is MFS-type transporter FVEG_12626 (415 aa).

The span at 1–18 (MDPDTEQMRVEKPNHEQP) shows a compositional bias: basic and acidic residues. Positions 1–22 (MDPDTEQMRVEKPNHEQPKPNT) are disordered. The next 6 membrane-spanning stretches (helical) occupy residues 27–47 (GGFK…VGVF), 63–83 (TVSW…PFVG), 93–113 (YLLL…SISS), 118–138 (YILS…YPSF), 151–171 (LALG…PIVV), and 178–198 (IGFG…LLVT). Residue asparagine 199 is glycosylated (N-linked (GlcNAc...) asparagine). Transmembrane regions (helical) follow at residues 227-247 (FILT…PITF), 264-284 (YLVS…GYIA), 290-310 (FNVS…LWLP), 318-338 (IAFA…SPAL), 354-374 (TMYA…GALI), and 386-406 (VFAG…RLYI).

Belongs to the major facilitator superfamily. Monocarboxylate porter (TC 2.A.1.13) family.

The protein localises to the membrane. MFS-type transporter; part of the Fusarium detoxification of benzoxazolinone cluster 2 (FDB2) involved in the degradation of benzoxazolinones produced by the host plant. Maize, wheat, and rye produce the 2 benzoxazinone phytoanticipins 2,4-dihy-droxy-7-methoxy-1,4-benzoxazin-3-one (DIMBOA) and 2,4-dihydroxy-1,4-benzoxazin-3-one (DIBOA) that, due to their inherent instability once released, spontaneously degrade to the more stable corresponding benzoxazolinones, 6-methoxy-2-benzoxazolinone (MBOA) and 2-benzoxazolinone (BOA), respectively. This Gibberella moniliformis (strain M3125 / FGSC 7600) (Maize ear and stalk rot fungus) protein is MFS-type transporter FVEG_12626.